The primary structure comprises 354 residues: Probable butyrate kinase 2 (354 aa).

This sequence belongs to the acetokinase family.

Its subcellular location is the cytoplasm. The enzyme catalyses butanoate + ATP = butanoyl phosphate + ADP. This is Probable butyrate kinase 2 from Caldanaerobacter subterraneus subsp. tengcongensis (strain DSM 15242 / JCM 11007 / NBRC 100824 / MB4) (Thermoanaerobacter tengcongensis).